Here is a 236-residue protein sequence, read N- to C-terminus: uncharacterized protein (236 aa).

The interval 186 to 236 is disordered; sequence HGRGDTRNLNDITGLGHERERDRENTHYEKKPKLDSDSEVDIRSFRQDMDL. Residues 201–236 are compositionally biased toward basic and acidic residues; the sequence is GHERERDRENTHYEKKPKLDSDSEVDIRSFRQDMDL. Ser-221 is subject to Phosphoserine.

This is an uncharacterized protein from Saccharomyces cerevisiae (strain ATCC 204508 / S288c) (Baker's yeast).